The primary structure comprises 319 residues: Ribonucleoside-diphosphate reductase small chain (319 aa).

Residues Asp-70, Glu-101, and His-104 each contribute to the Fe cation site. Tyr-108 is an active-site residue. Fe cation contacts are provided by Glu-163, Glu-197, and His-200. The interval 313–319 is interaction with R1; that stretch reads FSLDVDF.

This sequence belongs to the ribonucleoside diphosphate reductase small chain family. Interacts with RNR1/OPG080 subunit. Can interact with host RNR1 supunit. Requires Fe cation as cofactor.

The enzyme catalyses a 2'-deoxyribonucleoside 5'-diphosphate + [thioredoxin]-disulfide + H2O = a ribonucleoside 5'-diphosphate + [thioredoxin]-dithiol. Its function is as follows. Ribonucleoside-diphosphate reductase holoenzyme provides the precursors necessary for viral DNA synthesis. Allows virus growth in non-dividing cells. Catalyzes the biosynthesis of deoxyribonucleotides from the corresponding ribonucleotides. The polypeptide is Ribonucleoside-diphosphate reductase small chain (OPG048) (Vaccinia virus (strain Copenhagen) (VACV)).